The sequence spans 172 residues: WW domain binding protein VOPP1 (172 aa).

The first 22 residues, 1 to 22 (MARPLGRVAALLLGLLMECTEA), serve as a signal peptide directing secretion. Over 23 to 60 (KKHCWYFEGLYPTYYICRSYEDCCGSRCCVRALSIQRL) the chain is Extracellular. A helical transmembrane segment spans residues 61-81 (WYFWFLLMMGVLFCCGAGFFI). At 82-172 (RRRMYPPPLI…PPYEQVVKDK (91 aa)) the chain is on the cytoplasmic side. The segment at 139–172 (QVQPNSPHGGTTYPPPPSYCNTPPPPYEQVVKDK) is disordered. Residues 151-165 (YPPPPSYCNTPPPPY) show a composition bias toward pro residues.

Belongs to the VOPP1/ECOP family. As to quaternary structure, interacts with WWOX (via WW domain).

It localises to the cytoplasmic vesicle membrane. The protein resides in the late endosome membrane. It is found in the lysosome membrane. Increases the transcriptional activity of NFKB1 by facilitating its nuclear translocation, DNA-binding and associated apoptotic response, when overexpressed. May sequester WWOX in lysosomal vesicles and thereby regulate WWOX role as tumor suppressor. The protein is WW domain binding protein VOPP1 of Rattus norvegicus (Rat).